A 995-amino-acid polypeptide reads, in one-letter code: UPF0182 protein MMAR_1371 (995 aa).

The next 7 helical transmembrane spans lie at 18-38 (VLILIALGVIALLLAGPRLID), 63-83 (FLVFLVAGVLVGGIVFAGLAL), 113-133 (LFGIGIPAAIGLLAGIVAQSY), 175-195 (FVAIFLAFVANVVSHYLFGGI), 210-230 (IQLVSLVGVLVLLKAVAYWLD), 259-279 (KLILMAIAVICAAAVFSAIVL), and 287-307 (IGLVLLLLSSLIVGAAWPMIV). The disordered stretch occupies residues 900–948 (AATGIQPTEGGAPANVPPNNAPSPEALPGTPPSPPTAVPPAPEASVTLS). Residues 928–941 (GTPPSPPTAVPPAP) show a composition bias toward pro residues.

Belongs to the UPF0182 family.

The protein localises to the cell membrane. This chain is UPF0182 protein MMAR_1371, found in Mycobacterium marinum (strain ATCC BAA-535 / M).